The sequence spans 576 residues: Cilia- and flagella-associated protein 100 (576 aa).

The interval 1–29 is disordered; it reads MPIYDEASVPGTAAGRSTTDVGATAGANP. Coiled-coil stretches lie at residues 125–226, 254–311, and 342–408; these read IFLL…CRRY, VAEW…IMKE, and YKQL…LKDR. Disordered stretches follow at residues 417 to 439, 495 to 519, and 538 to 563; these read TLSM…PGGP, AEKA…HREH, and TGKP…RNDE.

Belongs to the CFAP100 family. In terms of assembly, interacts with FAP73; form the modifier of inner arm (MIA) complex.

It is found in the cytoplasm. Its subcellular location is the cytoskeleton. The protein resides in the flagellum axoneme. Functionally, as part of MIA, a complex associated with the outer doublet microtubules of the axoneme, may play a role in ciliary/flagellar motility by regulating the assembly and the activity of axonemal inner dynein arm. In Chlamydomonas reinhardtii (Chlamydomonas smithii), this protein is Cilia- and flagella-associated protein 100.